The sequence spans 117 residues: UPF0102 protein RHOS4_03930 (117 aa).

This sequence belongs to the UPF0102 family.

In Cereibacter sphaeroides (strain ATCC 17023 / DSM 158 / JCM 6121 / CCUG 31486 / LMG 2827 / NBRC 12203 / NCIMB 8253 / ATH 2.4.1.) (Rhodobacter sphaeroides), this protein is UPF0102 protein RHOS4_03930.